Consider the following 379-residue polypeptide: DnaJ homolog subfamily B member 14 (379 aa).

Topologically, residues 1–244 are cytoplasmic; it reads MEGNRDEAEK…GHEREEERAD (244 aa). Positions 56–90 are disordered; the sequence is TAGSSTHCRKPPGSSDQSKPSCGKDGTSGAGEGGK. The 65-residue stretch at 108–172 folds into the J domain; that stretch reads NYYEVLGVTK…EKRKQYDLTG (65 aa). Residues 245–265 traverse the membrane as a helical segment; it reads GGFSVFIQLMPIIVLILVSLL. Residues 266–379 lie on the Lumenal side of the membrane; sequence SQLMVSNPPY…ERLTSLYKGG (114 aa).

This sequence belongs to the DnaJ family. DNAJB12/DNAJB14 subfamily. Interacts (via J domain) with HSPA8/Hsc70. Forms a multiprotein complex, at least composed of DNAJB12, DNAJB14, HSPA8/Hsc70 and SGTA; interaction with DNAJB14 and HSPA8/Hsc70 is direct.

It localises to the endoplasmic reticulum membrane. It is found in the nucleus membrane. Its function is as follows. Acts as a co-chaperone with HSPA8/Hsc70; required to promote protein folding and trafficking, prevent aggregation of client proteins, and promote unfolded proteins to endoplasmic reticulum-associated degradation (ERAD) pathway. Acts by determining HSPA8/Hsc70's ATPase and polypeptide-binding activities. Can also act independently of HSPA8/Hsc70: together with DNAJB12, acts as a chaperone that promotes maturation of potassium channels KCND2 and KCNH2 by stabilizing nascent channel subunits and assembling them into tetramers. While stabilization of nascent channel proteins is dependent on HSPA8/Hsc70, the process of oligomerization of channel subunits is independent of HSPA8/Hsc70. When overexpressed, forms membranous structures together with DNAJB12 and HSPA8/Hsc70 within the nucleus; the role of these structures, named DJANGOs, is still unclear. This Mus musculus (Mouse) protein is DnaJ homolog subfamily B member 14.